The sequence spans 158 residues: Transcription factor BTF3 homolog 4 (158 aa).

The region spanning 33–98 is the NAC-A/B domain; sequence TADDKKLQSS…AETKQLTEML (66 aa). Positions 125-158 are disordered; that stretch reads LDNKAPKAEDIDEEDDDVPDLVENFDEASKNEAN. Over residues 134–150 the composition is skewed to acidic residues; that stretch reads DIDEEDDDVPDLVENFD.

The protein belongs to the NAC-beta family.

In Danio rerio (Zebrafish), this protein is Transcription factor BTF3 homolog 4 (btf3l4).